An 89-amino-acid polypeptide reads, in one-letter code: Small ribosomal subunit protein uS15 (89 aa).

Belongs to the universal ribosomal protein uS15 family. As to quaternary structure, part of the 30S ribosomal subunit. Forms a bridge to the 50S subunit in the 70S ribosome, contacting the 23S rRNA.

One of the primary rRNA binding proteins, it binds directly to 16S rRNA where it helps nucleate assembly of the platform of the 30S subunit by binding and bridging several RNA helices of the 16S rRNA. Functionally, forms an intersubunit bridge (bridge B4) with the 23S rRNA of the 50S subunit in the ribosome. This is Small ribosomal subunit protein uS15 from Thermodesulfovibrio yellowstonii (strain ATCC 51303 / DSM 11347 / YP87).